A 460-amino-acid polypeptide reads, in one-letter code: Biphenyl 2,3-dioxygenase subunit alpha (460 aa).

One can recognise a Rieske domain in the interval 56 to 165 (WLLMGHETQI…VETYKGLIFA (110 aa)). Positions 98, 100, 118, and 121 each coordinate [2Fe-2S] cluster. Position 217–230 (217–230 (QFCSDMYHAGTTSH)) interacts with substrate. Fe cation is bound by residues His224, His230, and Asp378.

The protein belongs to the bacterial ring-hydroxylating dioxygenase alpha subunit family. As to quaternary structure, heterohexamer consisting of three BphA1 subunits and three BphA2 subunits. The multicomponent biphenyl dioxygenase system is composed of a ferredoxin reductase (BphA4), a ferredoxin (BphA3), and a terminal oxygenase (BphA1A2). It depends on [2Fe-2S] cluster as a cofactor. Requires Fe cation as cofactor.

The enzyme catalyses biphenyl + NADH + O2 + H(+) = (2R,3S)-3-phenylcyclohexa-3,5-diene-1,2-diol + NAD(+). It functions in the pathway xenobiotic degradation; biphenyl degradation; 2-hydroxy-2,4-pentadienoate and benzoate from biphenyl: step 1/4. In terms of biological role, part of the oxygenase component of the biphenyl dioxygenase system that catalyzes the stereospecific dihydroxylation of the aromatic ring of biphenyl, yielding a dihydrodiol compound. Is essential for biphenyl degradation and growth of Rhodococcus sp. strain RHA1 on biphenyl as the sole source of carbon and energy. Can also use naphtalene and 4-chlorobiphenyl (4-CB) as substrates, as well as some polychlorinated biphenyls (PCB) such as 2,2'-dichlorobiphenyl, 2,3-dichlorobiphenyl and 2,5,2'-trichlorobiphenyl. Exhibits weak activity toward dibenzofuran and dibenzo-p-dioxin. Electrons are transferred from NADH to the [2Fe-2S] cluster in BphA1 via FAD of BphA4 and [2Fe-2S] cluster of BphA3. The chain is Biphenyl 2,3-dioxygenase subunit alpha from Rhodococcus jostii (strain RHA1).